Consider the following 502-residue polypeptide: MDIKAEEICAIIEQQIENFDREIEISEMGTIISVGDGIARIHGLNRAMAGELLEFPGDVIGMVLNLEEDNVGAAILGDTHHIKEGDSVRRTGRIVEVPVGEALIGRVVNGIGQPIDGGGALEGAEARQVEIKAPGIVTRKSVHQPVQTGLKAIDALVPIGRGQRELIIGDRQTGKTALAIDAIINQKGQDMVCIYVAIGQKQSTVAQVVDKLKQHGAMDYTIVVSAGASEPAPLQFIAPYAGVTMGEYFRDNGRHALIVYDDLSKHAVAYRQLSLLLRRPPGREAFPGDVFYLHSRLLERAAKLNDELGGGSLTALPIIETQAGDLSSYIPTNVISITDGQIFLEADLFYSGVRPAINVGLSVSRVGGSAQVKAMKQVAGTLRLSLAQYREMAAFAQFGSDLDAATQKQLARGARLVEILKQPQYQPLPVEKQILVIYAANNGYVDDYPLTVLRRYEEELYSFLEHRHGDLLKDLAEKKAIDTDLEARIKAVLAAFGEQFTP.

Residue 169-176 (GDRQTGKT) coordinates ATP.

This sequence belongs to the ATPase alpha/beta chains family. F-type ATPases have 2 components, CF(1) - the catalytic core - and CF(0) - the membrane proton channel. CF(1) has five subunits: alpha(3), beta(3), gamma(1), delta(1), epsilon(1). CF(0) has three main subunits: a(1), b(2) and c(9-12). The alpha and beta chains form an alternating ring which encloses part of the gamma chain. CF(1) is attached to CF(0) by a central stalk formed by the gamma and epsilon chains, while a peripheral stalk is formed by the delta and b chains.

It is found in the cell inner membrane. The catalysed reaction is ATP + H2O + 4 H(+)(in) = ADP + phosphate + 5 H(+)(out). Functionally, produces ATP from ADP in the presence of a proton gradient across the membrane. The alpha chain is a regulatory subunit. The protein is ATP synthase subunit alpha 1/3 of Syntrophotalea carbinolica (strain DSM 2380 / NBRC 103641 / GraBd1) (Pelobacter carbinolicus).